Consider the following 639-residue polypeptide: Chaperone protein DnaK (639 aa).

A Phosphothreonine; by autocatalysis modification is found at Thr198. Residues Ala603–Gln618 are compositionally biased toward low complexity. The tract at residues Ala603–Lys639 is disordered. Residues Asp625–Lys639 show a composition bias toward acidic residues.

It belongs to the heat shock protein 70 family.

Functionally, acts as a chaperone. The polypeptide is Chaperone protein DnaK (Shewanella sp. (strain MR-4)).